We begin with the raw amino-acid sequence, 228 residues long: Fluoride-specific ion channel FluC (228 aa).

The next 7 helical transmembrane spans lie at 3-23, 37-57, 72-92, 101-121, 141-161, 172-192, and 202-222; these read LSLF…FWVS, GTLF…VMMI, VGFL…LALF, ALNV…GAVL, IFGA…LAFA, LVLV…LVVT, and LWGA…LGLV. Glycine 76 and threonine 79 together coordinate Na(+).

Belongs to the fluoride channel Fluc/FEX (TC 1.A.43) family.

Its subcellular location is the cell inner membrane. It catalyses the reaction fluoride(in) = fluoride(out). Its activity is regulated as follows. Na(+) is not transported, but it plays an essential structural role and its presence is essential for fluoride channel function. Its function is as follows. Fluoride-specific ion channel. Important for reducing fluoride concentration in the cell, thus reducing its toxicity. The polypeptide is Fluoride-specific ion channel FluC (Methylococcus capsulatus (strain ATCC 33009 / NCIMB 11132 / Bath)).